The chain runs to 176 residues: Ribosome maturation factor RimM (176 aa).

The 80-residue stretch at 93-172 (EGEFFYFDVL…EILTKDAKSI (80 aa)) folds into the PRC barrel domain.

The protein belongs to the RimM family. As to quaternary structure, binds ribosomal protein uS19.

It localises to the cytoplasm. In terms of biological role, an accessory protein needed during the final step in the assembly of 30S ribosomal subunit, possibly for assembly of the head region. Essential for efficient processing of 16S rRNA. May be needed both before and after RbfA during the maturation of 16S rRNA. It has affinity for free ribosomal 30S subunits but not for 70S ribosomes. The protein is Ribosome maturation factor RimM of Campylobacter curvus (strain 525.92).